Reading from the N-terminus, the 291-residue chain is Homoserine kinase (291 aa).

An ATP-binding site is contributed by 80–90; that stretch reads RPASGLGSSAA.

Belongs to the GHMP kinase family. Homoserine kinase subfamily.

The protein localises to the cytoplasm. The enzyme catalyses L-homoserine + ATP = O-phospho-L-homoserine + ADP + H(+). It participates in amino-acid biosynthesis; L-threonine biosynthesis; L-threonine from L-aspartate: step 4/5. Catalyzes the ATP-dependent phosphorylation of L-homoserine to L-homoserine phosphate. This Haloarcula marismortui (strain ATCC 43049 / DSM 3752 / JCM 8966 / VKM B-1809) (Halobacterium marismortui) protein is Homoserine kinase.